The primary structure comprises 145 residues: Secreted LysM effector Vd2LysM (145 aa).

The N-terminal stretch at 1-18 (MRPDVFVLFTAFLGPAAA) is a signal peptide. 2 LysM domains span residues 31-75 (GWYI…KIKV) and 96-140 (GWYH…DIVV).

It belongs to the secreted LysM effector family. As to quaternary structure, forms homodimers in a chitin-independent manner through interactions at the N-termini of EPL2 monomers. Homodimers are further polymerized in a chitin-dependent manner.

Its function is as follows. Secreted effector that enables the plant pathogenic fungus to manipulate host defenses for successful infection. Binds chitin, suppresses chitin-induced immune responses and protects hyphae against degradation by plant hydrolytic enzymes. Chitin-induced polymerization of homodimers forms a contiguous ELP2 highly oligomeric super-complexe that may precipitate at infection sites to eliminate chitin oligomers, and thus suppress the activation of chitin-induced plant immunity. The polypeptide is Secreted LysM effector Vd2LysM (Verticillium dahliae (strain VdLs.17 / ATCC MYA-4575 / FGSC 10137) (Verticillium wilt)).